The chain runs to 893 residues: DNA mismatch repair protein MutS (893 aa).

Position 638 to 645 (638 to 645) interacts with ATP; the sequence is GPNMAGKS.

The protein belongs to the DNA mismatch repair MutS family.

In terms of biological role, this protein is involved in the repair of mismatches in DNA. It is possible that it carries out the mismatch recognition step. This protein has a weak ATPase activity. The chain is DNA mismatch repair protein MutS from Lawsonia intracellularis (strain PHE/MN1-00).